Reading from the N-terminus, the 109-residue chain is MAMTDTEFHQLADDMFQAIETAIETAIDEQDADVDIDASGNVLQLEFVDGSKIVINKQEPLHEIWVATRFGGYHFGFVDGKWIDGRNGGEFMPFVQDSILRQSGIALSF.

The protein belongs to the frataxin family.

Functionally, involved in iron-sulfur (Fe-S) cluster assembly. May act as a regulator of Fe-S biogenesis. The protein is Iron-sulfur cluster assembly protein CyaY of Shewanella sp. (strain ANA-3).